We begin with the raw amino-acid sequence, 257 residues long: Putative aldolase class 2 protein CC_1201 (257 aa).

Zn(2+)-binding residues include H114, H116, and H177.

The protein belongs to the aldolase class II family. Zn(2+) is required as a cofactor.

The polypeptide is Putative aldolase class 2 protein CC_1201 (Caulobacter vibrioides (strain ATCC 19089 / CIP 103742 / CB 15) (Caulobacter crescentus)).